The primary structure comprises 1131 residues: Activity-dependent neuroprotector homeobox protein 2 (1131 aa).

The C2H2-type 1 zinc finger occupies 73-96 (YCCGLCKYSTKVLTSFKNHLHRYH). The segment at 106–128 (IPCPNCVFASQPKVVGRHFRMFH) adopts a C2H2-type 2; degenerate zinc-finger fold. Residues Lys-118 and Lys-146 each participate in a glycyl lysine isopeptide (Lys-Gly) (interchain with G-Cter in SUMO2) cross-link. Residues 155 to 178 (FTCLKCNFSNTLYYSMKKHVLVAH) form a C2H2-type 3; degenerate zinc finger. A C2H2-type 4 zinc finger spans residues 215–240 (YYCKKCNANASSQDALMYHILTSDIH). A compositionally biased stretch (low complexity) spans 274–285 (LAAPANGSAPSA). Residues 274–329 (LAAPANGSAPSAPAQPPCFHLALPQNSPSPAAGQPVTVAQGAPGSLTHSPPAAGQS) form a disordered region. The segment at 694–716 (KTCPVCNELFPSNVYQVHMEVAH) adopts a C2H2-type 5; degenerate zinc-finger fold. A C2H2-type 6; degenerate zinc finger spans residues 747-768 (VRCLSCKCLVSEEELIHHLLMH). C2H2-type zinc fingers lie at residues 770–793 (LGCL…RNRH) and 875–898 (STCP…KERH). The C2H2-type 9; degenerate zinc-finger motif lies at 913 to 937 (FKCIHCCGVYTGNMTLAAIAVHLVR). Residues Lys-979 and Lys-1018 each participate in a glycyl lysine isopeptide (Lys-Gly) (interchain with G-Cter in SUMO2) cross-link. The residue at position 1024 (Ser-1024) is a Phosphoserine. Lys-1032 is covalently cross-linked (Glycyl lysine isopeptide (Lys-Gly) (interchain with G-Cter in SUMO1); alternate). Residue Lys-1032 forms a Glycyl lysine isopeptide (Lys-Gly) (interchain with G-Cter in SUMO2); alternate linkage. Positions 1043 to 1102 (PKKYEGRSYEEKKQFLKDYFHKKPYPSKKEIELLSSLFWVWKIDVASFFGKRRYICMKAI) form a DNA-binding region, homeobox.

It belongs to the krueppel C2H2-type zinc-finger protein family. May interact with SMARCA4/BRG1.

Its subcellular location is the nucleus. Its function is as follows. May be involved in transcriptional regulation. May play a role in neuronal function; perhaps involved in protection of brain tissues from oxidative stress. May be involved in erythroid differentiation. In Homo sapiens (Human), this protein is Activity-dependent neuroprotector homeobox protein 2 (ADNP2).